Here is a 91-residue protein sequence, read N- to C-terminus: Small ribosomal subunit protein uS19 (91 aa).

Belongs to the universal ribosomal protein uS19 family.

In terms of biological role, protein S19 forms a complex with S13 that binds strongly to the 16S ribosomal RNA. The polypeptide is Small ribosomal subunit protein uS19 (Synechococcus sp. (strain RCC307)).